The sequence spans 159 residues: Defense protein l(2)34Fc (159 aa).

The signal sequence occupies residues 1-17 (MFRLLVLAACLAISVHA). The region spanning 18-159 (YSDGAPKAAC…GRVTKDIDVE (142 aa)) is the Reelin domain. Cys27 and Cys99 are disulfide-bonded.

This sequence belongs to the insect defense protein family.

The protein resides in the secreted. May have antimicrobial activity. A late response immune regulated gene that is negatively regulated by spz during the immune response. This is Defense protein l(2)34Fc (l(2)34Fc) from Drosophila melanogaster (Fruit fly).